Reading from the N-terminus, the 296-residue chain is Light-independent protochlorophyllide reductase iron-sulfur ATP-binding protein (296 aa).

ATP-binding positions include 39–44 (GIGKST) and Lys-68. Ser-43 is a Mg(2+) binding site. Residues Cys-124 and Cys-158 each coordinate [4Fe-4S] cluster. 209–210 (NR) is a binding site for ATP.

This sequence belongs to the NifH/BchL/ChlL family. As to quaternary structure, homodimer. Protochlorophyllide reductase is composed of three subunits; ChlL, ChlN and ChlB. Requires [4Fe-4S] cluster as cofactor.

It carries out the reaction chlorophyllide a + oxidized 2[4Fe-4S]-[ferredoxin] + 2 ADP + 2 phosphate = protochlorophyllide a + reduced 2[4Fe-4S]-[ferredoxin] + 2 ATP + 2 H2O. It participates in porphyrin-containing compound metabolism; chlorophyll biosynthesis (light-independent). Its function is as follows. Component of the dark-operative protochlorophyllide reductase (DPOR) that uses Mg-ATP and reduced ferredoxin to reduce ring D of protochlorophyllide (Pchlide) to form chlorophyllide a (Chlide). This reaction is light-independent. The L component serves as a unique electron donor to the NB-component of the complex, and binds Mg-ATP. The polypeptide is Light-independent protochlorophyllide reductase iron-sulfur ATP-binding protein (Prochlorococcus marinus (strain MIT 9313)).